Consider the following 135-residue polypeptide: MNYFLKAPILGFEHINEVRLEKIDSLFSRLISQTNSPMALDMVLVNPYCLREYSFVIPKYIELLLELDSHSKVEVYCVVVLQKNLEDSMVNFLAPLVFNSKNGFGAQVALSMMDYPDFGFRDPLKSFVIQERERA.

This sequence belongs to the FliW family. In terms of assembly, interacts with translational regulator CsrA and flagellin(s).

It is found in the cytoplasm. Acts as an anti-CsrA protein, binds CsrA and prevents it from repressing translation of its target genes, one of which is flagellin. Binds to flagellin and participates in the assembly of the flagellum. The sequence is that of Flagellar assembly factor FliW 1 from Helicobacter pylori (strain ATCC 700392 / 26695) (Campylobacter pylori).